Here is a 569-residue protein sequence, read N- to C-terminus: Acyl-CoA transferase FVEG_12629 (569 aa).

It belongs to the CoA-transferase III family.

Its function is as follows. Acyl-CoA transferase; part of the Fusarium detoxification of benzoxazolinone cluster 2 (FDB2) involved in the degradation of benzoxazolinones produced by the host plant. Maize, wheat, and rye produce the 2 benzoxazinone phytoanticipins 2,4-dihy-droxy-7-methoxy-1,4-benzoxazin-3-one (DIMBOA) and 2,4-dihydroxy-1,4-benzoxazin-3-one (DIBOA) that, due to their inherent instability once released, spontaneously degrade to the more stable corresponding benzoxazolinones, 6-methoxy-2-benzoxazolinone (MBOA) and 2-benzoxazolinone (BOA), respectively. The first step in the detoxification of benzoxazolinones involves the hydrolysis of the cyclic ester bond of benzoxazolinones by the FDB1 cluster gamma-lactamase MBL1 to aminophenols. MBL1 is able to convert BOA into 2-aminophenol (2-AP), as well as MBOA into 5-methoxy-2-aminophenol (2-AMP). The FDB2 cluster N-malonyltransferase FDB2/NAT1 then metabolizes aminophenols via N-malonylation to non-toxic malonamic acids. FDB2/NAT1 converts 2-AP into N-(2-hydroxyphenyl) malonamic acid (HPMA) and 2-AMP into N-(2-hydroxy-4-methoxyphenyl) malonamic acid (HMPMA). The duplicated dienlactone hydrolases DLH1 and DLH2 may provide redundant function for hydrolyzing the lactone moiety in the BOA molecule. The roles of the amidases an other enzymes encoded by the 2 FDB clusters have not been identified so far. The protein is Acyl-CoA transferase FVEG_12629 of Gibberella moniliformis (strain M3125 / FGSC 7600) (Maize ear and stalk rot fungus).